The primary structure comprises 555 residues: Formate--tetrahydrofolate ligase (555 aa).

An ATP-binding site is contributed by 64–71 (TKAGIGKT).

The protein belongs to the formate--tetrahydrofolate ligase family.

The enzyme catalyses (6S)-5,6,7,8-tetrahydrofolate + formate + ATP = (6R)-10-formyltetrahydrofolate + ADP + phosphate. The protein operates within one-carbon metabolism; tetrahydrofolate interconversion. The chain is Formate--tetrahydrofolate ligase from Parabacteroides distasonis (strain ATCC 8503 / DSM 20701 / CIP 104284 / JCM 5825 / NCTC 11152).